The following is a 494-amino-acid chain: Probable cytosol aminopeptidase (494 aa).

Mn(2+) contacts are provided by lysine 260 and aspartate 265. Lysine 272 is an active-site residue. Mn(2+)-binding residues include aspartate 283, aspartate 342, and glutamate 344. The active site involves arginine 346.

This sequence belongs to the peptidase M17 family. Mn(2+) is required as a cofactor.

The protein resides in the cytoplasm. It catalyses the reaction Release of an N-terminal amino acid, Xaa-|-Yaa-, in which Xaa is preferably Leu, but may be other amino acids including Pro although not Arg or Lys, and Yaa may be Pro. Amino acid amides and methyl esters are also readily hydrolyzed, but rates on arylamides are exceedingly low.. The enzyme catalyses Release of an N-terminal amino acid, preferentially leucine, but not glutamic or aspartic acids.. Presumably involved in the processing and regular turnover of intracellular proteins. Catalyzes the removal of unsubstituted N-terminal amino acids from various peptides. The polypeptide is Probable cytosol aminopeptidase (Bacillus cereus (strain AH187)).